The chain runs to 328 residues: Methionyl-tRNA formyltransferase (328 aa).

Residue 110–113 participates in (6S)-5,6,7,8-tetrahydrofolate binding; it reads SLLP.

This sequence belongs to the Fmt family.

The catalysed reaction is L-methionyl-tRNA(fMet) + (6R)-10-formyltetrahydrofolate = N-formyl-L-methionyl-tRNA(fMet) + (6S)-5,6,7,8-tetrahydrofolate + H(+). Functionally, attaches a formyl group to the free amino group of methionyl-tRNA(fMet). The formyl group appears to play a dual role in the initiator identity of N-formylmethionyl-tRNA by promoting its recognition by IF2 and preventing the misappropriation of this tRNA by the elongation apparatus. The chain is Methionyl-tRNA formyltransferase from Prochlorococcus marinus (strain MIT 9215).